A 563-amino-acid chain; its full sequence is Pyruvate decarboxylase isozyme 1 (563 aa).

S2 carries the post-translational modification N-acetylserine. Residues D28, H115, and Y157 each contribute to the pyruvate site. An Omega-N-methylarginine modification is found at R161. Residue K212 forms a Glycyl lysine isopeptide (Lys-Gly) (interchain with G-Cter in ubiquitin) linkage. S223 is modified (phosphoserine). R224 contributes to the pyruvate binding site. A Glycyl lysine isopeptide (Lys-Gly) (interchain with G-Cter in ubiquitin) cross-link involves residue K233. Residue T266 is modified to Phosphothreonine. Residues K269 and K332 each participate in a glycyl lysine isopeptide (Lys-Gly) (interchain with G-Cter in ubiquitin) cross-link. Residues T336 and T353 each carry the phosphothreonine modification. Thiamine diphosphate is bound by residues T390 and 413 to 415 (GSI). D444 lines the Mg(2+) pocket. Residues 445 to 446 (GS) and 471 to 476 (NDGYTI) contribute to the thiamine diphosphate site. 2 residues coordinate Mg(2+): N471 and G473. E477 contributes to the pyruvate binding site. Glycyl lysine isopeptide (Lys-Gly) (interchain with G-Cter in ubiquitin) cross-links involve residues K484, K505, and K520. Phosphothreonine is present on T522. At S526 the chain carries Phosphoserine.

It belongs to the TPP enzyme family. As to quaternary structure, homotetramer. The cofactor is Mg(2+). It depends on thiamine diphosphate as a cofactor. In terms of processing, cleavage of N-terminal methionine and N-terminal acetylation by NAT1/ARD1.

Its subcellular location is the cytoplasm. The protein localises to the nucleus. The catalysed reaction is pyruvate + H(+) = acetaldehyde + CO2. The enzyme catalyses 3-methyl-2-oxobutanoate + H(+) = 2-methylpropanal + CO2. It carries out the reaction (S)-3-methyl-2-oxopentanoate + H(+) = 2-methylbutanal + CO2. It catalyses the reaction indole-3-pyruvate + H(+) = indole-3-acetaldehyde + CO2. The catalysed reaction is 3-phenylpyruvate + H(+) = 2-phenylacetaldehyde + CO2. The enzyme catalyses 2-oxobutanoate + H(+) = propanal + CO2. It carries out the reaction 2-oxopentanoate + H(+) = butanal + CO2. It catalyses the reaction 2 acetaldehyde = acetoin. The catalysed reaction is acetaldehyde + pyruvate + H(+) = acetoin + CO2. It functions in the pathway fermentation; ethanol fermentation. It participates in amino-acid degradation; Ehrlich pathway. With respect to regulation, allosterically activated by its substrate, pyruvate. Major of three pyruvate decarboxylases (PDC1, PDC5, PDC6) implicated in the nonoxidative conversion of pyruvate to acetaldehyde and carbon dioxide during alcoholic fermentation. Most of the produced acetaldehyde is subsequently reduced to ethanol, but some is required for cytosolic acetyl-CoA production for biosynthetic pathways. The enzyme is also one of five 2-oxo acid decarboxylases (PDC1, PDC5, PDC6, ARO10, and THI3) able to decarboxylate more complex 2-oxo acids (alpha-ketoacids) than pyruvate, which seem mainly involved in amino acid catabolism. Here the enzyme catalyzes the decarboxylation of amino acids, which, in a first step, have been transaminated to the corresponding 2-oxo acids. In a third step, the resulting aldehydes are reduced to alcohols, collectively referred to as fusel oils or alcohols. Its preferred substrates are the transaminated amino acids derived from threonine (2-oxobutanoate), norvaline (2-oxopentanoate), valine (3-methyl-2-oxobutanoate, also alpha-keto-isovalerate), isoleucine ((3S)-3-methyl-2-oxopentanoate, also alpha-keto-beta-methylvalerate), phenylalanine (phenylpyruvate), and tryptophan (3-(indol-3-yl)pyruvate), whereas transaminated leucine is no substrate. In a side-reaction the carbanionic intermediate (or active aldehyde) generated by decarboxylation or by activation of an aldehyde can react with an aldehyde via condensation (or carboligation) yielding a 2-hydroxy ketone, collectively called acyloins. In Saccharomyces cerevisiae (strain ATCC 204508 / S288c) (Baker's yeast), this protein is Pyruvate decarboxylase isozyme 1.